The primary structure comprises 1068 residues: MPLNKDIKKVLVIGSGPIVIGQAAEFDYSGTQACEGVKEEGVEVVLINSNPATIMTDKEVADKVYLEPLTVEFVEKVIAKERPDSLLAGMGGQTGLNLAVELYDKGILKKCGVNVIGTSIESIKEGEDRELFRNVMSRINEPVIQSEIVTDIENGKAFANKIGYPVIVRPAYTLGGTGGGIAESEEELDEILALGLQVSSIGQVLLEKSVKGWKEIEYEVMRDSRGNCVTVCNMENIDPVGIHTGDSIVVAPSQTLSDKEYQMLRSASINIINSIGIKGGCNVQFALNPNSFEYAVIEINPRVSRSSALASKATGYPIAKVAAKIALGYTLDEIKNAVTQKTYACFEPSLDYVVVKIPKWPFDKFQGADRVLGTKMMATGEIMAIGSNFEAAFLKGIRSLEIGKYSLEHKKFREFSMEELKTRVISPDDERIFALAEMLRRDYRMDKVAEITGIDKFFIKKFRWIVEEEQRLILSKIDDLDKEWLYKLKKKGFSDKGIADMLNISPEDIYKLRNIWGINPVYKMVDTCGGEFEALSPYYYSTYDVYDEVEVSKNKKVIVIGSGPIRIGQGIEFDYASVHCVKALKKLGIETIIVNNNPETVSTDFDVSDKLYFEPLTEEDVLNIVEKEKPNGIILQFGGQTAIKLAKFLKEKNIPILGTTAGQIDMAEDREKFDELLEKLQISRPKGKGIWSVEDGLEETKKLGFPVLVRPSYVLGGQGMEITHDEKELVYYLSNAFQKNKKNPILIDKYLMGREIEVDAISDGEDVLIPGIMEHLERAGVHSGDSITMYPTQNVSKDIKEKILEYTKKLALGIGIKGMINIQFIEFEGNLYVIEVNPRASRTVPYISKVSKVPIVDIATRVMLGEKLNDLGYRVGVYKEPELISVKVPVFSTQKLPRVEVCLGPEMKSTGEVLGVGKTLEEALYKGFIGANMSIKKEKGTILATINDHDKEEFLPIAKKLHSIGYKFIATSKTAELLKEEGIEVKQVRKLKEESPNIIDTIKNDEVDLVINTPTKGNDSKRDGFHIRRAAIERNLGVITSLDTLKAIVNIKSKEIKDETLHIFDLSN.

Residues 1-401 (MPLNKDIKKV…AFLKGIRSLE (401 aa)) are carboxyphosphate synthetic domain. 12 residues coordinate ATP: R129, R169, G175, G176, K208, V210, E215, G241, I242, H243, Q284, and E298. Positions 133-327 (RNVMSRINEP…IAKVAAKIAL (195 aa)) constitute an ATP-grasp 1 domain. Positions 284, 298, and 300 each coordinate Mg(2+). Residues Q284, E298, and N300 each contribute to the Mn(2+) site. The segment at 402–549 (IGKYSLEHKK…YSTYDVYDEV (148 aa)) is oligomerization domain. The tract at residues 550-932 (EVSKNKKVIV…ALYKGFIGAN (383 aa)) is carbamoyl phosphate synthetic domain. Residues 674 to 864 (DELLEKLQIS…IVDIATRVML (191 aa)) form the ATP-grasp 2 domain. 10 residues coordinate ATP: R710, K749, L751, E755, G780, V781, H782, S783, Q823, and E835. Mg(2+) is bound by residues Q823, E835, and N837. Mn(2+) is bound by residues Q823, E835, and N837. Residues 933–1068 (MSIKKEKGTI…ETLHIFDLSN (136 aa)) enclose the MGS-like domain. Residues 933-1068 (MSIKKEKGTI…ETLHIFDLSN (136 aa)) form an allosteric domain region.

The protein belongs to the CarB family. In terms of assembly, composed of two chains; the small (or glutamine) chain promotes the hydrolysis of glutamine to ammonia, which is used by the large (or ammonia) chain to synthesize carbamoyl phosphate. Tetramer of heterodimers (alpha,beta)4. The cofactor is Mg(2+). Mn(2+) serves as cofactor.

It carries out the reaction hydrogencarbonate + L-glutamine + 2 ATP + H2O = carbamoyl phosphate + L-glutamate + 2 ADP + phosphate + 2 H(+). It catalyses the reaction hydrogencarbonate + NH4(+) + 2 ATP = carbamoyl phosphate + 2 ADP + phosphate + 2 H(+). The protein operates within amino-acid biosynthesis; L-arginine biosynthesis; carbamoyl phosphate from bicarbonate: step 1/1. Its pathway is pyrimidine metabolism; UMP biosynthesis via de novo pathway; (S)-dihydroorotate from bicarbonate: step 1/3. Functionally, large subunit of the glutamine-dependent carbamoyl phosphate synthetase (CPSase). CPSase catalyzes the formation of carbamoyl phosphate from the ammonia moiety of glutamine, carbonate, and phosphate donated by ATP, constituting the first step of 2 biosynthetic pathways, one leading to arginine and/or urea and the other to pyrimidine nucleotides. The large subunit (synthetase) binds the substrates ammonia (free or transferred from glutamine from the small subunit), hydrogencarbonate and ATP and carries out an ATP-coupled ligase reaction, activating hydrogencarbonate by forming carboxy phosphate which reacts with ammonia to form carbamoyl phosphate. This chain is Carbamoyl phosphate synthase large chain, found in Clostridium botulinum (strain Loch Maree / Type A3).